A 275-amino-acid polypeptide reads, in one-letter code: Large ribosomal subunit protein uL2 (275 aa).

Residues 224–275 (AMNPVDHPHGGGEGKAPIGHPGPLTPWGKPALGYKTRKKGKASDKFIIRRRK) are disordered. Basic and acidic residues predominate over residues 264-275 (KASDKFIIRRRK).

It belongs to the universal ribosomal protein uL2 family. As to quaternary structure, part of the 50S ribosomal subunit. Forms a bridge to the 30S subunit in the 70S ribosome.

Functionally, one of the primary rRNA binding proteins. Required for association of the 30S and 50S subunits to form the 70S ribosome, for tRNA binding and peptide bond formation. It has been suggested to have peptidyltransferase activity; this is somewhat controversial. Makes several contacts with the 16S rRNA in the 70S ribosome. This Thermoanaerobacter pseudethanolicus (strain ATCC 33223 / 39E) (Clostridium thermohydrosulfuricum) protein is Large ribosomal subunit protein uL2.